We begin with the raw amino-acid sequence, 427 residues long: Adenylosuccinate synthetase (427 aa).

GTP contacts are provided by residues 12–18 (GDEGKGK) and 40–42 (GHT). Aspartate 13 serves as the catalytic Proton acceptor. Residues aspartate 13 and glycine 40 each contribute to the Mg(2+) site. Residues 13 to 16 (DEGK), 38 to 41 (NAGH), threonine 127, arginine 141, glutamine 222, threonine 237, and arginine 301 contribute to the IMP site. The active-site Proton donor is the histidine 41. A substrate-binding site is contributed by 297-303 (VVTKRPR). GTP-binding positions include arginine 303, 329–331 (SLD), and 411–413 (AVG).

Belongs to the adenylosuccinate synthetase family. As to quaternary structure, homodimer. Requires Mg(2+) as cofactor.

The protein resides in the cytoplasm. It catalyses the reaction IMP + L-aspartate + GTP = N(6)-(1,2-dicarboxyethyl)-AMP + GDP + phosphate + 2 H(+). It participates in purine metabolism; AMP biosynthesis via de novo pathway; AMP from IMP: step 1/2. Functionally, plays an important role in the de novo pathway of purine nucleotide biosynthesis. Catalyzes the first committed step in the biosynthesis of AMP from IMP. This is Adenylosuccinate synthetase from Leuconostoc citreum (strain KM20).